Reading from the N-terminus, the 129-residue chain is NADH-quinone oxidoreductase subunit A (129 aa).

3 helical membrane passes run 6-26 (FWPF…IVGF), 63-83 (LVAV…AWAV), and 89-109 (GWIG…ALIY).

The protein belongs to the complex I subunit 3 family. As to quaternary structure, NDH-1 is composed of 14 different subunits. Subunits NuoA, H, J, K, L, M, N constitute the membrane sector of the complex.

It localises to the cell inner membrane. It carries out the reaction a quinone + NADH + 5 H(+)(in) = a quinol + NAD(+) + 4 H(+)(out). Functionally, NDH-1 shuttles electrons from NADH, via FMN and iron-sulfur (Fe-S) centers, to quinones in the respiratory chain. The immediate electron acceptor for the enzyme in this species is believed to be ubiquinone. Couples the redox reaction to proton translocation (for every two electrons transferred, four hydrogen ions are translocated across the cytoplasmic membrane), and thus conserves the redox energy in a proton gradient. The polypeptide is NADH-quinone oxidoreductase subunit A (Nitrosococcus oceani (strain ATCC 19707 / BCRC 17464 / JCM 30415 / NCIMB 11848 / C-107)).